We begin with the raw amino-acid sequence, 237 residues long: MQQSKEERVHDVFEKISDKYDVMNSVISFQRHKAWRKETMRIMDVKPGSKALDVCCGTADWTIALANAVGPNGEVKGLDFSENMLAVGKEKVKALGLEQVELMHGNAMELPFEDHTFDYVTIGFGLRNVPDYMHVLKEMTRVVKPGGKVICLETSQPTMIGFRQIYILYFKYIMPLFGKIFAKSYKEYSWLQESASTFPGMKELARMFEDAGLERIQVKPFTFGVAAMHLGVKPESE.

S-adenosyl-L-methionine contacts are provided by residues Thr-58, Asp-79, and 106 to 107; that span reads NA.

This sequence belongs to the class I-like SAM-binding methyltransferase superfamily. MenG/UbiE family.

The catalysed reaction is a 2-demethylmenaquinol + S-adenosyl-L-methionine = a menaquinol + S-adenosyl-L-homocysteine + H(+). The protein operates within quinol/quinone metabolism; menaquinone biosynthesis; menaquinol from 1,4-dihydroxy-2-naphthoate: step 2/2. Functionally, methyltransferase required for the conversion of demethylmenaquinol (DMKH2) to menaquinol (MKH2). The sequence is that of Demethylmenaquinone methyltransferase from Bacillus cytotoxicus (strain DSM 22905 / CIP 110041 / 391-98 / NVH 391-98).